Consider the following 355-residue polypeptide: UDP-N-acetylglucosamine--N-acetylmuramyl-(pentapeptide) pyrophosphoryl-undecaprenol N-acetylglucosamine transferase (355 aa).

R166, S196, and Q290 together coordinate UDP-N-acetyl-alpha-D-glucosamine.

Belongs to the glycosyltransferase 28 family. MurG subfamily.

It localises to the cell membrane. It catalyses the reaction Mur2Ac(oyl-L-Ala-gamma-D-Glu-L-Lys-D-Ala-D-Ala)-di-trans,octa-cis-undecaprenyl diphosphate + UDP-N-acetyl-alpha-D-glucosamine = beta-D-GlcNAc-(1-&gt;4)-Mur2Ac(oyl-L-Ala-gamma-D-Glu-L-Lys-D-Ala-D-Ala)-di-trans,octa-cis-undecaprenyl diphosphate + UDP + H(+). It functions in the pathway cell wall biogenesis; peptidoglycan biosynthesis. Cell wall formation. Catalyzes the transfer of a GlcNAc subunit on undecaprenyl-pyrophosphoryl-MurNAc-pentapeptide (lipid intermediate I) to form undecaprenyl-pyrophosphoryl-MurNAc-(pentapeptide)GlcNAc (lipid intermediate II). In Staphylococcus haemolyticus (strain JCSC1435), this protein is UDP-N-acetylglucosamine--N-acetylmuramyl-(pentapeptide) pyrophosphoryl-undecaprenol N-acetylglucosamine transferase.